Here is a 258-residue protein sequence, read N- to C-terminus: Peptidase inhibitor 15 (258 aa).

Positions 1-21 are cleaved as a signal peptide; the sequence is MIEMISISAAFLLSLLCETCG. Positions 22 to 60 are excised as a propeptide; it reads LVLPKSSDLAIAASNYTIIKPDLSARLDPVKAPKARRKR. N-linked (GlcNAc...) asparagine glycosylation is found at asparagine 36 and asparagine 124. One can recognise an SCP domain in the interval 71–211; it reads VEYHNQVRGK…RRAVYLVCNY (141 aa).

The protein belongs to the CRISP family.

The protein localises to the secreted. Its function is as follows. Serine protease inhibitor which displays weak inhibitory activity against trypsin. May be involved in facial patterning during embryonic development. This Xenopus laevis (African clawed frog) protein is Peptidase inhibitor 15 (pi15).